Reading from the N-terminus, the 26-residue chain is Orexigenic neuropeptide 26RFa (26 aa).

Phenylalanine 26 is subject to Phenylalanine amide.

As to expression, brain.

The protein resides in the secreted. May have orexigenic activity. May promote aldosterone secretion by the adrenal gland. This is Orexigenic neuropeptide 26RFa from Pelophylax lessonae (Pool frog).